A 386-amino-acid chain; its full sequence is Succinate--CoA ligase [ADP-forming] subunit beta (386 aa).

In terms of domain architecture, ATP-grasp spans 9-244 (KELLRQYGVA…LDEEDPKEIE (236 aa)). ATP contacts are provided by residues K46, 53 to 55 (GRG), E99, C102, and E107. Mg(2+) is bound by residues N199 and D213. Substrate is bound by residues N264 and 321–323 (GIM).

This sequence belongs to the succinate/malate CoA ligase beta subunit family. As to quaternary structure, heterotetramer of two alpha and two beta subunits. Mg(2+) is required as a cofactor.

It carries out the reaction succinate + ATP + CoA = succinyl-CoA + ADP + phosphate. It catalyses the reaction GTP + succinate + CoA = succinyl-CoA + GDP + phosphate. The protein operates within carbohydrate metabolism; tricarboxylic acid cycle; succinate from succinyl-CoA (ligase route): step 1/1. Its function is as follows. Succinyl-CoA synthetase functions in the citric acid cycle (TCA), coupling the hydrolysis of succinyl-CoA to the synthesis of either ATP or GTP and thus represents the only step of substrate-level phosphorylation in the TCA. The beta subunit provides nucleotide specificity of the enzyme and binds the substrate succinate, while the binding sites for coenzyme A and phosphate are found in the alpha subunit. This is Succinate--CoA ligase [ADP-forming] subunit beta from Halalkalibacterium halodurans (strain ATCC BAA-125 / DSM 18197 / FERM 7344 / JCM 9153 / C-125) (Bacillus halodurans).